The sequence spans 199 residues: Peroxiredoxin 2 (199 aa).

One can recognise a Thioredoxin domain in the interval 8–166 (AFIGQPAPNF…TLRLIQAFQF (159 aa)). Cys53 acts as the Cysteine sulfenic acid (-SOH) intermediate in catalysis.

This sequence belongs to the peroxiredoxin family. AhpC/Prx1 subfamily. In terms of assembly, homodimer; disulfide-linked, upon oxidation.

It carries out the reaction a hydroperoxide + [thioredoxin]-dithiol = an alcohol + [thioredoxin]-disulfide + H2O. Functionally, thiol-specific peroxidase that catalyzes the reduction of hydrogen peroxide and organic hydroperoxides to water and alcohols, respectively. Plays a role in cell protection against oxidative stress by detoxifying peroxides and as sensor of hydrogen peroxide-mediated signaling events. The polypeptide is Peroxiredoxin 2 (tsa-2) (Brugia malayi (Filarial nematode worm)).